The following is a 189-amino-acid chain: Effector protein NleF (189 aa).

The tract at residues 186–189 (LQCG) is interaction with host caspases.

As to quaternary structure, monomer. Interacts (via C-terminus) with human CASP4, CASP8 and CASP9.

Its subcellular location is the secreted. The protein localises to the host cytoplasm. In terms of biological role, effector protein that alters host cell physiology and promotes bacterial survival in host tissues. Inhibits the catalytic activity of human CASP4, CASP8 and CASP9, and thereby inhibits apoptosis of infected host cells. In Escherichia coli O157:H7, this protein is Effector protein NleF (nleF).